Reading from the N-terminus, the 322-residue chain is MMRDLDLDALQAQLAGTPLQEWACELPGQLDAKLAIGHGDLARWYGAVQALPALPVSEVELARRFAFGGACDDASRAQLKTALQGLIPWRKGPFELFGVHIDTEWRSDWKWQRVAPHLDLTGKRILDVGCGNGYYMWRMLGAGAGSVVGIDPNWLFLCQFLAMKRYLPEQPVWHLPLAFEELPAKLQGFDTVFSMGVLYHRRSPIDHLLDLKDALVKGGELVLETLVVEGDAEQVLVPEDRYAQMRNVWFLPSVPALERWLRRAGFEDVRCVDVSTTSVDEQRATEWMRFQSLPEFLDPADHSRTVEGLPAPTRAVLIARKP.

7 residues coordinate carboxy-S-adenosyl-L-methionine: K91, W105, K110, G129, M195, Y199, and R314.

Belongs to the class I-like SAM-binding methyltransferase superfamily. CmoB family. As to quaternary structure, homotetramer.

The catalysed reaction is carboxy-S-adenosyl-L-methionine + 5-hydroxyuridine(34) in tRNA = 5-carboxymethoxyuridine(34) in tRNA + S-adenosyl-L-homocysteine + H(+). Functionally, catalyzes carboxymethyl transfer from carboxy-S-adenosyl-L-methionine (Cx-SAM) to 5-hydroxyuridine (ho5U) to form 5-carboxymethoxyuridine (cmo5U) at position 34 in tRNAs. The polypeptide is tRNA U34 carboxymethyltransferase (Ectopseudomonas mendocina (strain ymp) (Pseudomonas mendocina)).